A 343-amino-acid polypeptide reads, in one-letter code: Geranylgeranyl pyrophosphate synthase 1 (343 aa).

Isopentenyl diphosphate contacts are provided by lysine 43, arginine 46, and histidine 75. The Mg(2+) site is built by aspartate 82 and aspartate 86. Position 91 (arginine 91) interacts with dimethylallyl diphosphate. Residue arginine 92 participates in isopentenyl diphosphate binding. Dimethylallyl diphosphate is bound by residues lysine 169, threonine 170, and glutamine 212. Aspartate 215 lines the Mg(2+) pocket. Residues asparagine 219, lysine 229, and lysine 239 each contribute to the dimethylallyl diphosphate site.

Belongs to the FPP/GGPP synthase family. It depends on Mg(2+) as a cofactor.

The enzyme catalyses isopentenyl diphosphate + dimethylallyl diphosphate = (2E)-geranyl diphosphate + diphosphate. The catalysed reaction is isopentenyl diphosphate + (2E)-geranyl diphosphate = (2E,6E)-farnesyl diphosphate + diphosphate. It catalyses the reaction isopentenyl diphosphate + (2E,6E)-farnesyl diphosphate = (2E,6E,10E)-geranylgeranyl diphosphate + diphosphate. Its function is as follows. Geranylgeranyl pyrophosphate synthase; part of the gene cluster 4 that mediates the biosynthesis of an isoprenoid secondary metabolite. In Zymoseptoria tritici (strain CBS 115943 / IPO323) (Speckled leaf blotch fungus), this protein is Geranylgeranyl pyrophosphate synthase 1 (GGS1).